Reading from the N-terminus, the 153-residue chain is Large ribosomal subunit protein uL22 (153 aa).

Positions 110–153 (ITVIVESRPPKQKGASAASARSRRAQGSKAAATKKSAETKEGSE) are disordered. Residues 144 to 153 (KSAETKEGSE) show a composition bias toward basic and acidic residues.

The protein belongs to the universal ribosomal protein uL22 family. Part of the 50S ribosomal subunit.

This protein binds specifically to 23S rRNA; its binding is stimulated by other ribosomal proteins, e.g. L4, L17, and L20. It is important during the early stages of 50S assembly. It makes multiple contacts with different domains of the 23S rRNA in the assembled 50S subunit and ribosome. In terms of biological role, the globular domain of the protein is located near the polypeptide exit tunnel on the outside of the subunit, while an extended beta-hairpin is found that lines the wall of the exit tunnel in the center of the 70S ribosome. This chain is Large ribosomal subunit protein uL22, found in Mycolicibacterium smegmatis (strain ATCC 700084 / mc(2)155) (Mycobacterium smegmatis).